The following is a 69-amino-acid chain: Dermaseptin-H3 (69 aa).

A signal peptide spans 1–22 (MAFLKKSLFLVLFLGMVSLSIC). Positions 23–43 (EEEKRENEDEEKQEDDEQSEM) are excised as a propeptide. Positions 24–44 (EEKRENEDEEKQEDDEQSEMK) are disordered. Acidic residues predominate over residues 30-40 (EDEEKQEDDEQ). The residue at position 66 (L66) is a Leucine amide. A propeptide spanning residues 68-69 (EQ) is cleaved from the precursor.

This sequence belongs to the frog skin active peptide (FSAP) family. Dermaseptin subfamily. As to expression, expressed by the skin glands.

The protein localises to the secreted. Functionally, possesses a potent antimicrobial activity against Gram-positive and Gram-negative bacteria. Probably acts by disturbing membrane functions with its amphipathic structure. The protein is Dermaseptin-H3 of Pithecopus azureus (Orange-legged monkey tree frog).